The primary structure comprises 401 residues: Phosphoglycerate kinase (401 aa).

Residues 20-22 (DFN), Arg35, 58-61 (HLGR), Arg117, and Arg154 contribute to the substrate site. ATP contacts are provided by residues Lys204, Gly298, Glu329, and 358-361 (GGDS).

Belongs to the phosphoglycerate kinase family. In terms of assembly, monomer.

The protein resides in the cytoplasm. It carries out the reaction (2R)-3-phosphoglycerate + ATP = (2R)-3-phospho-glyceroyl phosphate + ADP. It participates in carbohydrate degradation; glycolysis; pyruvate from D-glyceraldehyde 3-phosphate: step 2/5. In Bifidobacterium longum (strain DJO10A), this protein is Phosphoglycerate kinase.